Consider the following 123-residue polypeptide: MPTINQLIRKGRKKVKKKKTAPALQGSPQKRGVCTRVYTATPKKPNSALRKVARVRLTNGIEVTAYIPGIGHNLQEHSVVLVRGGRVKDLPGVRYHIVRGALDAAGVEGRKQGRSKYGVKKPK.

Over residues 10–20 the composition is skewed to basic residues; that stretch reads KGRKKVKKKKT. Residues 10 to 32 form a disordered region; that stretch reads KGRKKVKKKKTAPALQGSPQKRG. The residue at position 89 (aspartate 89) is a 3-methylthioaspartic acid.

Belongs to the universal ribosomal protein uS12 family. As to quaternary structure, part of the 30S ribosomal subunit. Contacts proteins S8 and S17. May interact with IF1 in the 30S initiation complex.

With S4 and S5 plays an important role in translational accuracy. In terms of biological role, interacts with and stabilizes bases of the 16S rRNA that are involved in tRNA selection in the A site and with the mRNA backbone. Located at the interface of the 30S and 50S subunits, it traverses the body of the 30S subunit contacting proteins on the other side and probably holding the rRNA structure together. The combined cluster of proteins S8, S12 and S17 appears to hold together the shoulder and platform of the 30S subunit. The sequence is that of Small ribosomal subunit protein uS12 from Halothermothrix orenii (strain H 168 / OCM 544 / DSM 9562).